The chain runs to 1343 residues: DNA-directed RNA polymerase subunit beta (1343 aa).

Belongs to the RNA polymerase beta chain family. As to quaternary structure, the RNAP catalytic core consists of 2 alpha, 1 beta, 1 beta' and 1 omega subunit. When a sigma factor is associated with the core the holoenzyme is formed, which can initiate transcription.

The enzyme catalyses RNA(n) + a ribonucleoside 5'-triphosphate = RNA(n+1) + diphosphate. Its function is as follows. DNA-dependent RNA polymerase catalyzes the transcription of DNA into RNA using the four ribonucleoside triphosphates as substrates. The chain is DNA-directed RNA polymerase subunit beta from Shewanella piezotolerans (strain WP3 / JCM 13877).